Consider the following 214-residue polypeptide: MIRLIFLGAPGTGKGTISSYLKEQHGFFHISSGDLFRFYAKEEKTALAEEIKSYINNGLYVPDELTNRTVADFYHKNQSQDKIIFDGYPRTLNQCEYIDEIIKFTHVILLQPTDWDMIINRLSLRRSCPQCKRIYNINSVDFKPKVANLCDLCKVELIHRKDDDPSVVSTRINVYNEQTKPVIEYYKKKNLLHVVDANKSFEELYKLVLEIVNK.

11 to 16 (GTGKGT) contributes to the ATP binding site. Residues 31–61 (SSGDLFRFYAKEEKTALAEEIKSYINNGLYV) form an NMP region. Residues serine 32, arginine 37, 59 to 61 (LYV), 87 to 90 (GYPR), and glutamine 94 each bind AMP. The tract at residues 124–163 (LRRSCPQCKRIYNINSVDFKPKVANLCDLCKVELIHRKDD) is LID. Position 125 (arginine 125) interacts with ATP. 2 residues coordinate Zn(2+): cysteine 128 and cysteine 131. An ATP-binding site is contributed by 134–135 (IY). Cysteine 150 and cysteine 153 together coordinate Zn(2+). 2 residues coordinate AMP: arginine 160 and arginine 171. ATP is bound at residue lysine 199.

The protein belongs to the adenylate kinase family. As to quaternary structure, monomer.

It is found in the cytoplasm. It carries out the reaction AMP + ATP = 2 ADP. The protein operates within purine metabolism; AMP biosynthesis via salvage pathway; AMP from ADP: step 1/1. Functionally, catalyzes the reversible transfer of the terminal phosphate group between ATP and AMP. Plays an important role in cellular energy homeostasis and in adenine nucleotide metabolism. In Mycoplasmoides gallisepticum (strain R(low / passage 15 / clone 2)) (Mycoplasma gallisepticum), this protein is Adenylate kinase.